The following is a 447-amino-acid chain: MTKPVASYELDEKRFLTLLGKLIGETENLQNRPPALIPIEDNAGRHVIEALTPYLKANGGVLELEQVHCDPVNYPKRGNIIIEYPGTSKGTSSPKTISFVGSHLDVVPADKTAWDRNPFQLIIEGDKLYGRGTTDCLGHVALLTDLFIQLATEKPALKHSIFAVFIVSEENDEIPGIGVDALDHSGKMNPCKNGPVYWVDSADSQPTIGTGGAQTWNLTAHGKNMHSAMPYRTVNSVELVNEALAEIQRRFYIDFKPHPKEAEYKFDCSSTMKPTLWKPIAGSYNTIPGESTICGDIRLTPFYDMKEMRAKVEGYIKDINANITELRNRGPYSKYDVPASEGVEPVKGSVSIEWLGEASAGVACKLDSDGYKALGKATSEILGSLTPVATCGTLPLVRDLQDSGFDIQITGFGKEETYHADNEYALLSDFKNAIKILSRTIDLLEKN.

Histidine 103 contributes to the Zn(2+) binding site. Aspartate 105 is an active-site residue. Aspartate 135 serves as a coordination point for Zn(2+). Residue glutamate 169 is the Proton acceptor of the active site. 2 residues coordinate Zn(2+): glutamate 170 and histidine 419.

The protein belongs to the peptidase M20A family. ArgE subfamily. As to quaternary structure, homodimer. Requires Zn(2+) as cofactor. It depends on Co(2+) as a cofactor.

It catalyses the reaction N(2)-acetyl-L-ornithine + H2O = L-ornithine + acetate. It functions in the pathway amino-acid biosynthesis; L-arginine biosynthesis; L-ornithine from N(2)-acetyl-L-ornithine (linear): step 1/1. In Dictyostelium discoideum (Social amoeba), this protein is Acetylornithine deacetylase (argE).